The following is a 304-amino-acid chain: Acetyl-coenzyme A carboxylase carboxyl transferase subunit beta (304 aa).

Residues 25 to 294 enclose the CoA carboxyltransferase N-terminal domain; that stretch reads VWTKCDSCGQ…PSVVESKADT (270 aa). Zn(2+) contacts are provided by cysteine 29, cysteine 32, cysteine 48, and cysteine 51. The C4-type zinc finger occupies 29-51; the sequence is CDSCGQVLYRAELERNLEVCPKC.

This sequence belongs to the AccD/PCCB family. Acetyl-CoA carboxylase is a heterohexamer composed of biotin carboxyl carrier protein (AccB), biotin carboxylase (AccC) and two subunits each of ACCase subunit alpha (AccA) and ACCase subunit beta (AccD). It depends on Zn(2+) as a cofactor.

Its subcellular location is the cytoplasm. The catalysed reaction is N(6)-carboxybiotinyl-L-lysyl-[protein] + acetyl-CoA = N(6)-biotinyl-L-lysyl-[protein] + malonyl-CoA. Its pathway is lipid metabolism; malonyl-CoA biosynthesis; malonyl-CoA from acetyl-CoA: step 1/1. Component of the acetyl coenzyme A carboxylase (ACC) complex. Biotin carboxylase (BC) catalyzes the carboxylation of biotin on its carrier protein (BCCP) and then the CO(2) group is transferred by the transcarboxylase to acetyl-CoA to form malonyl-CoA. The chain is Acetyl-coenzyme A carboxylase carboxyl transferase subunit beta from Yersinia pestis (strain Pestoides F).